The following is a 1191-amino-acid chain: DNA topoisomerase 2 (1191 aa).

ATP is bound by residues asparagine 64, asparagine 95, and 142-149; that span reads GTNGVGLK. Glutamate 437, aspartate 538, and aspartate 540 together coordinate Mg(2+). A Topo IIA-type catalytic domain is found at 706–1173; that stretch reads IPNFLDGMTR…PGASVWLEEI (468 aa). Tyrosine 799 serves as the catalytic O-(5'-phospho-DNA)-tyrosine intermediate.

Belongs to the type II topoisomerase family. It depends on Mg(2+) as a cofactor. Mn(2+) is required as a cofactor. Requires Ca(2+) as cofactor.

It is found in the host cytoplasm. It carries out the reaction ATP-dependent breakage, passage and rejoining of double-stranded DNA.. Functionally, type II topoisomerase. Processively relaxes supercoiled DNA. Displays DNA-supercoiling activity only when associated with the viral histone-like protein. This is DNA topoisomerase 2 from Ornithodoros (relapsing fever ticks).